The primary structure comprises 517 residues: Steroid 17-alpha-hydroxylase/17,20 lyase (517 aa).

Residue Cys451 coordinates heme.

This sequence belongs to the cytochrome P450 family. Heme is required as a cofactor.

The protein localises to the membrane. It catalyses the reaction a C21-steroid + reduced [NADPH--hemoprotein reductase] + O2 = a 17alpha-hydroxy-C21-steroid + oxidized [NADPH--hemoprotein reductase] + H2O + H(+). The catalysed reaction is 17alpha-hydroxyprogesterone + reduced [NADPH--hemoprotein reductase] + O2 = androst-4-ene-3,17-dione + acetate + oxidized [NADPH--hemoprotein reductase] + H2O + 2 H(+). It carries out the reaction 17alpha-hydroxypregnenolone + reduced [NADPH--hemoprotein reductase] + O2 = 3beta-hydroxyandrost-5-en-17-one + acetate + oxidized [NADPH--hemoprotein reductase] + H2O + 2 H(+). The protein operates within lipid metabolism; steroid biosynthesis. Its function is as follows. Conversion of pregnenolone and progesterone to their 17-alpha-hydroxylated products and subsequently to dehydroepiandrosterone (DHEA) and androstenedione. Catalyzes both the 17-alpha-hydroxylation and the 17,20-lyase reaction. The chain is Steroid 17-alpha-hydroxylase/17,20 lyase (cyp17a1) from Oryzias latipes (Japanese rice fish).